We begin with the raw amino-acid sequence, 303 residues long: Zinc transporter ZIP9 (303 aa).

A helical transmembrane segment spans residues 7-27 (ISLLSLAMLVGCYVSGIIPLA). Asn29 carries N-linked (GlcNAc...) asparagine glycosylation. 5 consecutive transmembrane segments (helical) span residues 35–55 (LKLV…AVIV), 102–122 (AYIG…DQIG), 142–162 (ITTT…LGAA), 172–192 (LIVF…LVSF), and 206–226 (HLLV…LGLS). Asn237 is a glycosylation site (N-linked (GlcNAc...) asparagine). 2 helical membrane-spanning segments follow: residues 240 to 260 (GVAM…HVLP) and 282 to 302 (LEVC…IGHQ).

The protein belongs to the ZIP transporter (TC 2.A.5) family.

It is found in the golgi apparatus. Its subcellular location is the trans-Golgi network membrane. It localises to the cell membrane. The protein resides in the cytoplasm. The protein localises to the perinuclear region. It is found in the mitochondrion. Its subcellular location is the nucleus. It carries out the reaction Zn(2+)(in) = Zn(2+)(out). Its function is as follows. Transports zinc ions across cell and organelle membranes into the cytoplasm and regulates intracellular zinc homeostasis. Participates in the zinc ions efflux out of the secretory compartments. Also functions as a membrane androgen receptor that mediates, through a G protein, the non-classical androgen signaling pathway, characterized by the activation of MAPK3/MAPK1 (Erk1/2) and transcription factors CREB1 or ATF1. Moreover, has dual functions as a membrane-bound androgen receptor and as an androgen-dependent zinc transporter both of which are mediated through an inhibitory G protein (Gi) that mediates both MAP kinase and zinc signaling leading to the androgen-dependent apoptotic process. This Xenopus tropicalis (Western clawed frog) protein is Zinc transporter ZIP9.